The chain runs to 446 residues: ATP-dependent protease ATPase subunit HslU (446 aa).

Residues Val18, 60-65 (GVGKTE), Asp259, Glu324, and Arg396 each bind ATP.

This sequence belongs to the ClpX chaperone family. HslU subfamily. As to quaternary structure, a double ring-shaped homohexamer of HslV is capped on each side by a ring-shaped HslU homohexamer. The assembly of the HslU/HslV complex is dependent on binding of ATP.

Its subcellular location is the cytoplasm. ATPase subunit of a proteasome-like degradation complex; this subunit has chaperone activity. The binding of ATP and its subsequent hydrolysis by HslU are essential for unfolding of protein substrates subsequently hydrolyzed by HslV. HslU recognizes the N-terminal part of its protein substrates and unfolds these before they are guided to HslV for hydrolysis. This is ATP-dependent protease ATPase subunit HslU from Acidovorax sp. (strain JS42).